Here is a 541-residue protein sequence, read N- to C-terminus: Tetratricopeptide repeat protein 8 (541 aa).

The stretch at 14 to 47 is one TPR 1 repeat; the sequence is YFRRRKFQLCADLCTQMLEKSPYDQEPDPELPVH. Positions 118 to 137 are disordered; that stretch reads PITGFLRPSTQSGRPGTMEQ. TPR repeat units lie at residues 251-284, 285-317, 318-351, 352-385, 386-419, 423-456, and 457-490; these read WWWK…QEMV, DTFL…FPGE, VTLL…DNTH, VEAI…GIYN, GQLF…AENE, ADVW…NNNH, and AEAY…APHM.

Part of BBSome complex, that contains BBS1, BBS2, BBS4, BBS5, BBS7, BBS8/TTC8, BBS9 and BBIP10. Interacts with PCM1. Interacts with CCDC28B. Interacts with PKD1. Widely expressed.

Its subcellular location is the cytoplasm. The protein localises to the cytoskeleton. The protein resides in the microtubule organizing center. It is found in the centrosome. It localises to the cell projection. Its subcellular location is the cilium membrane. The protein localises to the centriolar satellite. The protein resides in the cilium. The BBSome complex is thought to function as a coat complex required for sorting of specific membrane proteins to the primary cilia. The BBSome complex is required for ciliogenesis but is dispensable for centriolar satellite function. This ciliogenic function is mediated in part by the Rab8 GDP/GTP exchange factor, which localizes to the basal body and contacts the BBSome. Rab8(GTP) enters the primary cilium and promotes extension of the ciliary membrane. Firstly the BBSome associates with the ciliary membrane and binds to RAB3IP/Rabin8, the guanosyl exchange factor (GEF) for Rab8 and then the Rab8-GTP localizes to the cilium and promotes docking and fusion of carrier vesicles to the base of the ciliary membrane. The BBSome complex, together with the LTZL1, controls SMO ciliary trafficking and contributes to the sonic hedgehog (SHH) pathway regulation. Required for proper BBSome complex assembly and its ciliary localization. This Homo sapiens (Human) protein is Tetratricopeptide repeat protein 8 (TTC8).